Here is an 87-residue protein sequence, read N- to C-terminus: Small ribosomal subunit protein bS21m (87 aa).

Belongs to the bacterial ribosomal protein bS21 family. Component of the mitochondrial ribosome small subunit (28S) which comprises a 12S rRNA and about 30 distinct proteins.

The protein localises to the mitochondrion. The protein is Small ribosomal subunit protein bS21m (Mrps21) of Mus musculus (Mouse).